The primary structure comprises 159 residues: Phosphopantetheine adenylyltransferase (159 aa).

Thr-10 is a substrate binding site. Residues 10–11 and His-18 contribute to the ATP site; that span reads TF. Residues Lys-42, Met-74, and Arg-88 each contribute to the substrate site. ATP is bound by residues 89-91, Glu-99, and 124-130; these read GLR and WSFISSS.

The protein belongs to the bacterial CoaD family. As to quaternary structure, homohexamer. The cofactor is Mg(2+).

Its subcellular location is the cytoplasm. The catalysed reaction is (R)-4'-phosphopantetheine + ATP + H(+) = 3'-dephospho-CoA + diphosphate. Its pathway is cofactor biosynthesis; coenzyme A biosynthesis; CoA from (R)-pantothenate: step 4/5. Functionally, reversibly transfers an adenylyl group from ATP to 4'-phosphopantetheine, yielding dephospho-CoA (dPCoA) and pyrophosphate. This is Phosphopantetheine adenylyltransferase from Escherichia coli (strain SMS-3-5 / SECEC).